A 357-amino-acid polypeptide reads, in one-letter code: SNF1-related protein kinase regulatory subunit gamma-like PV42b (357 aa).

4 consecutive CBS domains span residues 16-97 (MIDK…DGES), 113-185 (HCPE…SSQL), 198-273 (AIHN…WLPL), and 293-351 (STPG…ALLS).

The protein belongs to the 5'-AMP-activated protein kinase gamma subunit family. In terms of tissue distribution, expressed highly in rosette leaves, cauline leaves, open flowers, developing siliques and dry seeds, but at a low level in stems and floral buds.

Functionally, plays redundant role with PV42a in regulating male gametogenesis and pollen tube guidance. The protein is SNF1-related protein kinase regulatory subunit gamma-like PV42b (PV42B) of Arabidopsis thaliana (Mouse-ear cress).